The primary structure comprises 458 residues: Exodeoxyribonuclease 7 large subunit (458 aa).

The protein belongs to the XseA family. Heterooligomer composed of large and small subunits.

It localises to the cytoplasm. The enzyme catalyses Exonucleolytic cleavage in either 5'- to 3'- or 3'- to 5'-direction to yield nucleoside 5'-phosphates.. Bidirectionally degrades single-stranded DNA into large acid-insoluble oligonucleotides, which are then degraded further into small acid-soluble oligonucleotides. The polypeptide is Exodeoxyribonuclease 7 large subunit (Yersinia pseudotuberculosis serotype O:1b (strain IP 31758)).